We begin with the raw amino-acid sequence, 357 residues long: Membrane-bound lytic murein transglycosylase C (357 aa).

Residues 1–17 form the signal peptide; sequence MKLKKFLVLLLIPFLYA. The N-palmitoyl cysteine moiety is linked to residue Cys18. Cys18 carries S-diacylglycerol cysteine lipidation.

It belongs to the transglycosylase Slt family.

The protein resides in the cell outer membrane. The catalysed reaction is Exolytic cleavage of the (1-&gt;4)-beta-glycosidic linkage between N-acetylmuramic acid (MurNAc) and N-acetylglucosamine (GlcNAc) residues in peptidoglycan, from either the reducing or the non-reducing ends of the peptidoglycan chains, with concomitant formation of a 1,6-anhydrobond in the MurNAc residue.. Its function is as follows. Murein-degrading enzyme. May play a role in recycling of muropeptides during cell elongation and/or cell division. This Mannheimia succiniciproducens (strain KCTC 0769BP / MBEL55E) protein is Membrane-bound lytic murein transglycosylase C.